Here is an 84-residue protein sequence, read N- to C-terminus: Small ribosomal subunit protein bS18 (84 aa).

It belongs to the bacterial ribosomal protein bS18 family. Part of the 30S ribosomal subunit. Forms a tight heterodimer with protein bS6.

Functionally, binds as a heterodimer with protein bS6 to the central domain of the 16S rRNA, where it helps stabilize the platform of the 30S subunit. This Dictyoglomus turgidum (strain DSM 6724 / Z-1310) protein is Small ribosomal subunit protein bS18.